The sequence spans 163 residues: Large ribosomal subunit protein uL10 (163 aa).

It belongs to the universal ribosomal protein uL10 family. Part of the ribosomal stalk of the 50S ribosomal subunit. The N-terminus interacts with L11 and the large rRNA to form the base of the stalk. The C-terminus forms an elongated spine to which L12 dimers bind in a sequential fashion forming a multimeric L10(L12)X complex.

Its function is as follows. Forms part of the ribosomal stalk, playing a central role in the interaction of the ribosome with GTP-bound translation factors. This is Large ribosomal subunit protein uL10 (rplJ) from Haemophilus influenzae (strain ATCC 51907 / DSM 11121 / KW20 / Rd).